A 498-amino-acid polypeptide reads, in one-letter code: Putative phosphotransferase 057R (498 aa).

The protein is Putative phosphotransferase 057R of Dryophytes versicolor (chameleon treefrog).